The following is a 497-amino-acid chain: Guanosine-5'-triphosphate,3'-diphosphate pyrophosphatase (497 aa).

The protein belongs to the GppA/Ppx family. GppA subfamily.

It catalyses the reaction guanosine 3'-diphosphate 5'-triphosphate + H2O = guanosine 3',5'-bis(diphosphate) + phosphate + H(+). The protein operates within purine metabolism; ppGpp biosynthesis; ppGpp from GTP: step 2/2. Its function is as follows. Catalyzes the conversion of pppGpp to ppGpp. Guanosine pentaphosphate (pppGpp) is a cytoplasmic signaling molecule which together with ppGpp controls the 'stringent response', an adaptive process that allows bacteria to respond to amino acid starvation, resulting in the coordinated regulation of numerous cellular activities. This Photobacterium profundum (strain SS9) protein is Guanosine-5'-triphosphate,3'-diphosphate pyrophosphatase.